Consider the following 151-residue polypeptide: MQIWVDADACPNVIKDVLFRVADRLQVQVTLVANKLLRTPPSRFIKAIQVPAGFDVADNEIVRLVQAGDLVITADIPLAADVLEKGGHPLNPRGEFYTKDNIQQHLTMRSFMDDLRSSGVDTGGPSAFSQGDIRAFANQLDRYLARQRSKG.

This sequence belongs to the UPF0178 family.

The polypeptide is UPF0178 protein mma_0312 (Janthinobacterium sp. (strain Marseille) (Minibacterium massiliensis)).